The chain runs to 69 residues: MKTHYFLLVMICFLFSQMEPGVGILTSLGRRTDQYKCLQHGGFCLRSSCPSNTKLQGTCKPDKPNCCKS.

An N-terminal signal peptide occupies residues 1 to 21 (MKTHYFLLVMICFLFSQMEPG). Positions 22-32 (VGILTSLGRRT) are excised as a propeptide. Cystine bridges form between Cys-37/Cys-66, Cys-44/Cys-59, and Cys-49/Cys-67.

Belongs to the beta-defensin family. In terms of assembly, monomer. Homodimer. As to expression, detected in kidney.

It is found in the secreted. It localises to the membrane. In terms of biological role, has bactericidal activity. May act as a ligand for C-C chemokine receptor CCR6. Positively regulates the sperm motility and bactericidal activity in a CCR6-dependent manner. Binds to CCR6 and triggers Ca2+ mobilization in the sperm which is important for its motility. The protein is Beta-defensin 1 (Defb1) of Mus musculus (Mouse).